The primary structure comprises 436 residues: MQKTAPRPLPARISFLSASVLGLGAAVASRGAVFVSNILLAHSLTVHDFGLFSYAYVTALNLGLFLATGVSQAAGHVLPLIENPERKRTQLCAFIVLLMALIAVAAAALYLSSASISVAAFGSEQGSGALRMAAIVLIATAFTQALQSFQYAMHEHRSSATISIGAAVLLLTMLWAMGPIRQPALALTIFLAVNAGAAVSQLLVLARATPSQRGPWRTGREELRLAVKHALPSVLTTSMGAPVHWICLSMLAAMTDGAHQLALFSVAFQWYIAITFIPATLGNLALPFLARHAGATETTVRQRFRSALLFGGGLSLALGCASFLLAGEIFAWFYPAEYGSAASSMRSLSVAAALCGVSVLLQQRIAAAGKFWRNFAMAAVYSVIYVAASYLALRLGFGATSIGLAMSAAYCCLILFQTLTLQGDSGAAIRLGRSFS.

The next 12 membrane-spanning stretches (helical) occupy residues 20 to 40 (VLGL…NILL), 49 to 69 (FGLF…LATG), 91 to 111 (LCAF…ALYL), 133 to 153 (AAIV…QYAM), 160 to 180 (ATIS…MGPI), 185 to 205 (LALT…LLVL), 234 to 254 (VLTT…LAAM), 261 to 281 (LALF…PATL), 307 to 327 (ALLF…LLAG), 341 to 361 (AASS…SVLL), 375 to 395 (FAMA…ALRL), and 396 to 416 (GFGA…LILF).

It to E.coli bicyclomycin resistance protein (BCR).

The protein localises to the cell inner membrane. Probably involved in polymerization and/or export of exopolysaccharide EPS I which functions as a virulence factor. May play a role in export of EPS I or its intermediates across the membranes. This chain is EPS I polysaccharide export inner membrane protein EpsE (epsE), found in Ralstonia solanacearum (Pseudomonas solanacearum).